The chain runs to 199 residues: Large ribosomal subunit protein bL9 (199 aa).

The span at 149-166 (AEAERINRGEDINSRQED) shows a compositional bias: basic and acidic residues. Residues 149–199 (AEAERINRGEDINSRQEDQDAAAEAIAAAGEFFDPEAQDETPETEAASEQQ) are disordered. The span at 181–191 (FDPEAQDETPE) shows a compositional bias: acidic residues.

Belongs to the bacterial ribosomal protein bL9 family.

Functionally, binds to the 23S rRNA. This is Large ribosomal subunit protein bL9 from Afipia carboxidovorans (strain ATCC 49405 / DSM 1227 / KCTC 32145 / OM5) (Oligotropha carboxidovorans).